A 213-amino-acid chain; its full sequence is MGCVSSKQFKRAAQHEDPAILAKETTFSVSEVEALFELFKKISHSIFRDGLIHKEEFQLALFRNSNKKNLFANRIFDLFDLKRNGVIDFGEFVRSLSIFHPETPLGDKIAFAFRLYDLRGTGCIEREELHEMVLALLNESDLFLSEEAVEQIVDQTFKQADLNDDGKIDPDEWKTFASKNPALLKNMTLPYLKDITMVFPSFILNSEVCEEEL.

Gly2 carries N-myristoyl glycine lipidation. EF-hand domains lie at 31–66, 67–102, 104–139, and 148–183; these read EVEALFELFKKISHSIFRDGLIHKEEFQLALFRNSN, KKNLFANRIFDLFDLKRNGVIDFGEFVRSLSIFHPE, PLGDKIAFAFRLYDLRGTGCIEREELHEMVLALLNE, and AVEQIVDQTFKQADLNDDGKIDPDEWKTFASKNPAL. Positions 161, 163, 165, 167, and 172 each coordinate Ca(2+).

It belongs to the calcineurin regulatory subunit family. As to quaternary structure, homodimer. In terms of tissue distribution, expressed at low levels in roots, shoots, culms, leaves and young spikelets.

It localises to the cell membrane. In terms of biological role, acts as a calcium sensor. May function as positive regulator of salt stress responses. CBL proteins interact with CIPK serine-threonine protein kinases. Binding of a CBL protein to the regulatory NAF domain of a CIPK protein lead to the activation of the kinase in a calcium-dependent manner. The chain is Calcineurin B-like protein 8 (CBL8) from Oryza sativa subsp. japonica (Rice).